The sequence spans 816 residues: Probable transcriptional regulator SLK2 (816 aa).

Disordered regions lie at residues 133 to 153 and 166 to 189; these read HDPSVQLGGSSATSLPTSQTN and SFFQDPNNLTQARKKPRLDSKQDD. Polar residues-rich tracts occupy residues 139 to 153 and 166 to 176; these read LGGSSATSLPTSQTN and SFFQDPNNLTQ. The tract at residues 307-554 is dimerization; the sequence is PSESSIVYWR…DQKVGPIEAL (248 aa). A Nuclear localization signal motif is present at residues 316–330; that stretch reads RKFVTEYFSPRAKKR. Polar residues-rich tracts occupy residues 644 to 662 and 672 to 711; these read IQQEPSRNRSASPSYQGTS and PSISGVSSHLSPQRQMPSSSYNGSTQQYHQQPPSCSSGNQ. The disordered stretch occupies residues 644–711; it reads IQQEPSRNRS…QPPSCSSGNQ (68 aa).

This sequence belongs to the adn1/SEU family. As to quaternary structure, forms corepressor complexes with LUH; LUH is the transcription repressor subunit and SLK2 the specific DNA-binding adapters. In terms of tissue distribution, expressed in young flower meristems, ovules and the carpel margin meristem.

The protein resides in the nucleus. Probable transcription regulator that functions in the development of the carpel margin meristem similarly to SEUSS (SEU). In association with SEU, supports organ development from meristematic regions by facilitating auxin response and thus organ initiation, and by sustaining meristematic potential through the maintenance of PHABULOSA expression. DNA-binding adapter subunit of the SEU-SLK2 transcriptional corepressor of abiotic stress (e.g. salt and osmotic stress) response genes. This Arabidopsis thaliana (Mouse-ear cress) protein is Probable transcriptional regulator SLK2 (SLK2).